The primary structure comprises 120 residues: Ribonuclease P protein component (120 aa).

The protein belongs to the RnpA family. As to quaternary structure, consists of a catalytic RNA component (M1 or rnpB) and a protein subunit.

The enzyme catalyses Endonucleolytic cleavage of RNA, removing 5'-extranucleotides from tRNA precursor.. RNaseP catalyzes the removal of the 5'-leader sequence from pre-tRNA to produce the mature 5'-terminus. It can also cleave other RNA substrates such as 4.5S RNA. The protein component plays an auxiliary but essential role in vivo by binding to the 5'-leader sequence and broadening the substrate specificity of the ribozyme. This chain is Ribonuclease P protein component, found in Chelativorans sp. (strain BNC1).